Here is a 187-residue protein sequence, read N- to C-terminus: Elongation factor P (187 aa).

The protein belongs to the elongation factor P family.

Its subcellular location is the cytoplasm. It functions in the pathway protein biosynthesis; polypeptide chain elongation. In terms of biological role, involved in peptide bond synthesis. Stimulates efficient translation and peptide-bond synthesis on native or reconstituted 70S ribosomes in vitro. Probably functions indirectly by altering the affinity of the ribosome for aminoacyl-tRNA, thus increasing their reactivity as acceptors for peptidyl transferase. The protein is Elongation factor P of Rhizorhabdus wittichii (strain DSM 6014 / CCUG 31198 / JCM 15750 / NBRC 105917 / EY 4224 / RW1) (Sphingomonas wittichii).